The sequence spans 98 residues: Small ribosomal subunit protein uS19 (98 aa).

The tract at residues T77 to K98 is disordered.

The protein belongs to the universal ribosomal protein uS19 family.

In terms of biological role, protein S19 forms a complex with S13 that binds strongly to the 16S ribosomal RNA. This is Small ribosomal subunit protein uS19 from Chlorobium luteolum (strain DSM 273 / BCRC 81028 / 2530) (Pelodictyon luteolum).